We begin with the raw amino-acid sequence, 519 residues long: tRNA-2-methylthio-N(6)-dimethylallyladenosine synthase (519 aa).

A disordered region spans residues Met1–Lys23. The span at Lys7 to Ala17 shows a compositional bias: polar residues. Residues Lys76 to Phe194 form the MTTase N-terminal domain. [4Fe-4S] cluster is bound by residues Cys85, Cys121, Cys155, Cys231, Cys235, and Cys238. Residues Arg217–Lys450 enclose the Radical SAM core domain. The 64-residue stretch at Lys450 to Glu513 folds into the TRAM domain.

The protein belongs to the methylthiotransferase family. MiaB subfamily. As to quaternary structure, monomer. The cofactor is [4Fe-4S] cluster.

The protein localises to the cytoplasm. It catalyses the reaction N(6)-dimethylallyladenosine(37) in tRNA + (sulfur carrier)-SH + AH2 + 2 S-adenosyl-L-methionine = 2-methylsulfanyl-N(6)-dimethylallyladenosine(37) in tRNA + (sulfur carrier)-H + 5'-deoxyadenosine + L-methionine + A + S-adenosyl-L-homocysteine + 2 H(+). In terms of biological role, catalyzes the methylthiolation of N6-(dimethylallyl)adenosine (i(6)A), leading to the formation of 2-methylthio-N6-(dimethylallyl)adenosine (ms(2)i(6)A) at position 37 in tRNAs that read codons beginning with uridine. This is tRNA-2-methylthio-N(6)-dimethylallyladenosine synthase from Oceanobacillus iheyensis (strain DSM 14371 / CIP 107618 / JCM 11309 / KCTC 3954 / HTE831).